Reading from the N-terminus, the 217-residue chain is Nitrile hydratase subunit beta (217 aa).

This sequence belongs to the nitrile hydratase subunit beta family. In terms of assembly, heterodimer of an alpha and a beta chain.

The catalysed reaction is an aliphatic primary amide = an aliphatic nitrile + H2O. NHase catalyzes the hydration of various nitrile compounds to the corresponding amides. The chain is Nitrile hydratase subunit beta (nthB) from Pseudomonas putida (Arthrobacter siderocapsulatus).